The sequence spans 552 residues: Hyaluronan synthase 2 (552 aa).

The Cytoplasmic portion of the chain corresponds to 1 to 11 (MHCERFLCILR). A helical transmembrane segment spans residues 12–32 (IIGTTLFGVSLLLGITAAYIV). Residues 33–45 (GYQFIQTDNYYFS) lie on the Extracellular side of the membrane. The helical transmembrane segment at 46–66 (FGLYGAFLASHLIIQSLFAFL) threads the bilayer. At 67–374 (EHRKMKKSLE…NAMWFHKHHL (308 aa)) the chain is on the cytoplasmic side. Thr-110 bears the Phosphothreonine mark. Lys-190 participates in a covalent cross-link: Glycyl lysine isopeptide (Lys-Gly) (interchain with G-Cter in ubiquitin). O-linked (GlcNAc) serine glycosylation is present at Ser-221. A Phosphothreonine modification is found at Thr-328. The helical transmembrane segment at 375–395 (WMTYEAVITGFFPFFLIATVI) threads the bilayer. The Extracellular portion of the chain corresponds to 396–402 (QLFYRGK). Residues 403–423 (IWNTLLFLLTVQLVGLIKSSF) form a helical membrane-spanning segment. Topologically, residues 424–429 (ASCLRG) are cytoplasmic. The helical transmembrane segment at 430–450 (NIVMVFMSLYSVLYMSSLLPA) threads the bilayer. Topologically, residues 451 to 475 (KMFAIATINKAGWGTSGRKTIVVNF) are extracellular. Residues 476–496 (IGLIPVSVWFTILLGGVIFTI) traverse the membrane as a helical segment. Residues 497-510 (YKESKKPFSESKQT) lie on the Cytoplasmic side of the membrane. Residues 511-531 (VLIVGTLLYACYWVMLLTLYV) traverse the membrane as a helical segment. Residues 532 to 552 (VLINKCGRRKKGQQYDMVLDV) lie on the Extracellular side of the membrane.

It belongs to the NodC/HAS family. As to quaternary structure, homodimer; dimerization promotes enzymatic activity. Forms heterodimer with HAS3. Forms heterodimer with HAS1. The cofactor is Mg(2+). Post-translationally, phosphorylation at Thr-328 is essential for hyaluronan synthase activity. O-GlcNAcylation at Ser-221 increases the stability of HAS2 and plasma membrane localization. In terms of processing, ubiquitination at Lys-190; this ubiquitination is essential for hyaluronan synthase activity and homo- or hetero-oligomerization. Can also be poly-ubiquitinated. Deubiquitinated by USP17 and USP4. USP17 efficiently removes 'Lys-63'- and 'Lys-48'-linked polyubiquitin chains, whereas USP4 preferentially removes monoubiquitination and, partially, both 'Lys-63'- and 'Lys-48'-linked polyubiquitin chain. In terms of tissue distribution, expressed in corneal endothelial cells.

The protein resides in the cell membrane. It localises to the endoplasmic reticulum membrane. It is found in the vesicle. The protein localises to the golgi apparatus membrane. Its subcellular location is the lysosome. It carries out the reaction [hyaluronan](n) + UDP-N-acetyl-alpha-D-glucosamine = N-acetyl-beta-D-glucosaminyl-(1-&gt;4)-[hyaluronan](n) + UDP + H(+). The enzyme catalyses N-acetyl-beta-D-glucosaminyl-(1-&gt;4)-[hyaluronan](n) + UDP-alpha-D-glucuronate = [hyaluronan](n+1) + UDP + H(+). It functions in the pathway glycan biosynthesis; hyaluronan biosynthesis. Its function is as follows. Catalyzes the addition of GlcNAc or GlcUA monosaccharides to the nascent hyaluronan polymer. Therefore, it is essential to hyaluronan synthesis a major component of most extracellular matrices that has a structural role in tissues architectures and regulates cell adhesion, migration and differentiation. This is one of three isoenzymes responsible for cellular hyaluronan synthesis and it is particularly responsible for the synthesis of high molecular mass hyaluronan. In Bos taurus (Bovine), this protein is Hyaluronan synthase 2 (HAS2).